Reading from the N-terminus, the 483-residue chain is Glutamyl-tRNA(Gln) amidotransferase subunit A (483 aa).

Active-site charge relay system residues include Lys-76 and Ser-151. Catalysis depends on Ser-175, which acts as the Acyl-ester intermediate.

It belongs to the amidase family. GatA subfamily. As to quaternary structure, heterotrimer of A, B and C subunits.

The enzyme catalyses L-glutamyl-tRNA(Gln) + L-glutamine + ATP + H2O = L-glutaminyl-tRNA(Gln) + L-glutamate + ADP + phosphate + H(+). Allows the formation of correctly charged Gln-tRNA(Gln) through the transamidation of misacylated Glu-tRNA(Gln) in organisms which lack glutaminyl-tRNA synthetase. The reaction takes place in the presence of glutamine and ATP through an activated gamma-phospho-Glu-tRNA(Gln). The sequence is that of Glutamyl-tRNA(Gln) amidotransferase subunit A from Pseudomonas savastanoi pv. phaseolicola (strain 1448A / Race 6) (Pseudomonas syringae pv. phaseolicola (strain 1448A / Race 6)).